Here is a 157-residue protein sequence, read N- to C-terminus: Methylglyoxal synthase (157 aa).

Residues 1–157 form the MGS-like domain; that stretch reads MSKVKNIAVV…DFSSYTQRKL (157 aa). Substrate is bound by residues histidine 12, lysine 16, 38-41, and 71-72; these read TGTT and SG. Aspartate 77 acts as the Proton donor/acceptor in catalysis. Histidine 104 contacts substrate.

This sequence belongs to the methylglyoxal synthase family.

It carries out the reaction dihydroxyacetone phosphate = methylglyoxal + phosphate. Catalyzes the formation of methylglyoxal from dihydroxyacetone phosphate. This is Methylglyoxal synthase from Maridesulfovibrio salexigens (strain ATCC 14822 / DSM 2638 / NCIMB 8403 / VKM B-1763) (Desulfovibrio salexigens).